The following is a 316-amino-acid chain: Ribose-phosphate pyrophosphokinase (316 aa).

ATP contacts are provided by residues 40-42 (DGE) and 99-100 (RQ). The Mg(2+) site is built by histidine 133 and aspartate 174. Lysine 197 is a catalytic residue. D-ribose 5-phosphate contacts are provided by residues arginine 199, aspartate 223, and 227 to 231 (DTAGT).

It belongs to the ribose-phosphate pyrophosphokinase family. Class I subfamily. As to quaternary structure, homohexamer. The cofactor is Mg(2+).

Its subcellular location is the cytoplasm. The catalysed reaction is D-ribose 5-phosphate + ATP = 5-phospho-alpha-D-ribose 1-diphosphate + AMP + H(+). Its pathway is metabolic intermediate biosynthesis; 5-phospho-alpha-D-ribose 1-diphosphate biosynthesis; 5-phospho-alpha-D-ribose 1-diphosphate from D-ribose 5-phosphate (route I): step 1/1. Involved in the biosynthesis of the central metabolite phospho-alpha-D-ribosyl-1-pyrophosphate (PRPP) via the transfer of pyrophosphoryl group from ATP to 1-hydroxyl of ribose-5-phosphate (Rib-5-P). This is Ribose-phosphate pyrophosphokinase from Fusobacterium nucleatum subsp. nucleatum (strain ATCC 25586 / DSM 15643 / BCRC 10681 / CIP 101130 / JCM 8532 / KCTC 2640 / LMG 13131 / VPI 4355).